The primary structure comprises 418 residues: Peptide chain release factor subunit 1 (418 aa).

The protein belongs to the eukaryotic release factor 1 family. In terms of assembly, heterodimer of two subunits, one of which binds GTP.

The protein localises to the cytoplasm. In terms of biological role, directs the termination of nascent peptide synthesis (translation) in response to the termination codons UAA, UAG and UGA. The chain is Peptide chain release factor subunit 1 from Haloarcula marismortui (strain ATCC 43049 / DSM 3752 / JCM 8966 / VKM B-1809) (Halobacterium marismortui).